A 195-amino-acid polypeptide reads, in one-letter code: HTH-type transcriptional regulator BetI (195 aa).

The 61-residue stretch at 8 to 68 folds into the HTH tetR-type domain; it reads SIRRRQLIDA…ATMRDITSQL (61 aa). Positions 31–50 form a DNA-binding region, H-T-H motif; that stretch reads TIAQIARRAGVSTGIISHYF.

Its pathway is amine and polyamine biosynthesis; betaine biosynthesis via choline pathway [regulation]. Functionally, repressor involved in the biosynthesis of the osmoprotectant glycine betaine. It represses transcription of the choline transporter BetT and the genes of BetAB involved in the synthesis of glycine betaine. The sequence is that of HTH-type transcriptional regulator BetI from Shigella flexneri serotype 5b (strain 8401).